Consider the following 232-residue polypeptide: 2-C-methyl-D-erythritol 4-phosphate cytidylyltransferase (232 aa).

This sequence belongs to the IspD/TarI cytidylyltransferase family. IspD subfamily.

The catalysed reaction is 2-C-methyl-D-erythritol 4-phosphate + CTP + H(+) = 4-CDP-2-C-methyl-D-erythritol + diphosphate. It functions in the pathway isoprenoid biosynthesis; isopentenyl diphosphate biosynthesis via DXP pathway; isopentenyl diphosphate from 1-deoxy-D-xylulose 5-phosphate: step 2/6. In terms of biological role, catalyzes the formation of 4-diphosphocytidyl-2-C-methyl-D-erythritol from CTP and 2-C-methyl-D-erythritol 4-phosphate (MEP). This is 2-C-methyl-D-erythritol 4-phosphate cytidylyltransferase from Synechococcus elongatus (strain ATCC 33912 / PCC 7942 / FACHB-805) (Anacystis nidulans R2).